A 2324-amino-acid polypeptide reads, in one-letter code: MEESSQPAKPLEMNPHSRFIIGSVSEDNSEDETSSLVKLDLLEEKERSLSPVSVCSDSLSDLGLPSAQDGLANHMRPSMSGLHLVKQGRDRKKVDVQRDFTVASPAEFVTRFGGNRVIEKVLIANNGIAAVKCMRSIRRWSYEMFRNERAIRFVVMVTPEDLKANAEYIKMADHYVPVPGGPNNNNYANVELILDIAKRIPVQAVWAGWGHASENPKLPELLHKNGIAFMGPPSQAMWALGDKIASSIVAQTAGIPTLPWNGSGLRVDWQENDLQKRILNVPQELYEKGYVKDADDGLRAAEEVGYPVMIKASEGGGGKGIRKVNNADDFPNLFRQVQAEVPGSPIFVMRLAKQSRHLEVQILADQYGNAISLFGRDCSVQRRHQKIIEEAPASIATSVVFEHMEQCAVKLAKMVGYVSAGTVEYLYSQDGSFYFLELNPRLQVEHPCTEMVADVNLPAAQLQIAMGIPLHRIKDIRVMYGVSPWGDGSIDFENSAHVPCPRGHVIAARITSENPDEGFKPSSGTVQELNFRSNKNVWGYFSVAAAGGLHEFADSQFGHCFSWGENREEAISNMVVALKELSIRGDFRTTVEYLIKLLETESFQQNRIDTGWLDRLIAEKVQAERPDTMLGVVCGALHVADVSFRNSVSNFLHSLERGQVLPAHTLLNTVDVELIYEGRKYVLKVTRQSPNSYVVIMNSSCVEVDVHRLSDGGLLLSYDGSSYTTYMKEEVDRYRITIGNKTCVFEKENDPSILRSPSAGKLIQYVVEDGGHVFAGQCFAEIEVMKMVMTLTAGESGCIHYVKRPGAVLDPGCVIAKLQLDDPSRVQQAELHTGTLPQIQSTALRGEKLHRIFHYVLDNLVNVMNGYCLPEPYFSSKVKGWVERLMKTLRDPSLPLLELQDIMTSVSGRIPPNVEKSIKKEMAQYASNITSVLCQFPSQQIANILDSHAATLNRKSEREVFFMNTQSIVQLVQRYRSGIRGHMKAVVMDLLRQYLKVETQFQHGHYDKCVFALREENKSDMNAVLNYIFSHAQVTKKNLLVTMLIDQLCGRDPTLTDELINILTELTQLSKTTNAKVALRARQVLIASHLPSYELRHNQVESIFLSAIDMYGHQFCIENLQKLILSETSIFDVLPNFFYHSNQVVRMAALEVYVRRAYIAYELNSVQHRQLKDNTCVVEFQFMLPTSHPNRMSFSSNLNHYGMVHVASVSDVLLDNSFTPPCQRMGGMVSFRTFEDFVRIFDEVMSCFCDSPPQSPTFPEAGHASLYDEDKAAREEPIHILNVAIKTDGDVDDDGLAAMFREFTQSKKSVLIEHGIRRLTFLVAQKREFPKFFTFRARDKFEEDRIYRHLEPALAFQLELNRMRNFDLTAIPCANHKMHLYLGAAKVEVGTEVTDYRFFVRAIIRHSDLVTKEASFEYLQNEGERLLLEAMDELEVAFNNTNVRTDCNHIFLNFVPTVIMDPSKIEESVRSMVMRYGSRLWKLRVLQAELKINIRLTPTGKAIPIRLFLTNESGYYLDISLYKEVTDSRTGQIMFQAYGDKQGPLHGMLINTPYVTKDLLQSKRFQAQSLGTSYVYDIPEMFRQSLIKLWDSMNEHAFLPTPPLPSDILTYTELVLDDQGQLVHMNRLPGGNEIGMVAWKMTLKTPEYPEGRDIIVIGNDITYRIGSFGPQEDVLFLRASELARTHGIPRIYVAANSGARIGLAEEIRHMFHVAWEDPDDPYKGYKYLYLTPQDYKKVSALNSVHCEHVEDNGESRYKITDIIGKEDGLGIENLRGSGMIAGESSLAYESIITINLVTCRAIGIGAYLVRLGQRTIQVENSHIILTGCGALNKVLGREVYTSNNQLGGIQIMHNNGVTHGTVCDDFEGVYTILLWLSYMPKSVYSPVPILKVKDPIDRTIDFVPTKTPYDPRWMLAGRPNPSQKGQWQSGFFDNGSFLEIMQPWAQTVVVGRARLGGIPVGVVAVETRTVELSIPADPANLDSEAKIIQQAGQVWFPDSAFKTAQAINDFNREGLPLMVFANWRGFSGGMKDMYDQVLKFGAYIVDGLREYRQPVLIYIPPQAELRGGSWAVIDPTINPRHMEMYADRESRGGILEPEGTVEIKFRRKDLVKTMRRVDPVYMRLAERLGTPELSAADRKDLESKLKEREEFLIPIYHQVAMQFADLHDTPGRMQEKGAITDILDWKTSRTFFYWRLRRLLLEDVVKKKIHDANPELTDGQIQAMLRRWFVEVEGTVKAYLWDSNKDLVEWLEKQLMEEEGVRSVVDENIKYISRDYILKQIRSLVQANPEVAMDSIVHMTQHISPTQRAEIVRILSTMDSPSST.

Residue M1 is modified to N-acetylmethionine. The tract at residues 1–34 is disordered; it reads MEESSQPAKPLEMNPHSRFIIGSVSEDNSEDETS. Phosphoserine is present on residues S78 and S80. In terms of domain architecture, Biotin carboxylation spans 117 to 618; that stretch reads VIEKVLIANN…DTGWLDRLIA (502 aa). The 192-residue stretch at 275–466 folds into the ATP-grasp domain; that stretch reads QKRILNVPQE…LPAAQLQIAM (192 aa). ATP is bound at residue 315–320; that stretch reads GGGGKG. The Mn(2+) site is built by E424, E437, and N439. R441 is a catalytic residue. The region spanning 745-819 is the Biotinyl-binding domain; the sequence is FEKENDPSIL…DPGCVIAKLQ (75 aa). The residue at position 786 (K786) is an N6-biotinyllysine. A Phosphoserine modification is found at S1193. The CoA carboxyltransferase N-terminal domain maps to 1553 to 1891; it reads PYVTKDLLQS…SVYSPVPILK (339 aa). A carboxyltransferase region spans residues 1553 to 2211; it reads PYVTKDLLQS…EDVVKKKIHD (659 aa). Residues R1800, K2104, and R2106 each contribute to the CoA site. One can recognise a CoA carboxyltransferase C-terminal domain in the interval 1895–2211; it reads PIDRTIDFVP…EDVVKKKIHD (317 aa).

The cofactor is biotin. It depends on Mn(2+) as a cofactor.

Its subcellular location is the cytoplasm. The enzyme catalyses hydrogencarbonate + acetyl-CoA + ATP = malonyl-CoA + ADP + phosphate + H(+). It catalyses the reaction N(6)-biotinyl-L-lysyl-[protein] + hydrogencarbonate + ATP = N(6)-carboxybiotinyl-L-lysyl-[protein] + ADP + phosphate + H(+). It functions in the pathway lipid metabolism; malonyl-CoA biosynthesis; malonyl-CoA from acetyl-CoA: step 1/1. Its activity is regulated as follows. By phosphorylation. In terms of biological role, catalyzes the rate-limiting reaction in the biogenesis of long-chain fatty acids. Carries out three functions: biotin carboxyl carrier protein, biotin carboxylase and carboxyltransferase. This is Acetyl-CoA carboxylase (ACAC) from Gallus gallus (Chicken).